Reading from the N-terminus, the 305-residue chain is N-acetylmuramic acid 6-phosphate etherase (305 aa).

The region spanning 61–224 is the SIS domain; the sequence is ISDALAKGGR…STGAMVKLGK (164 aa). Residue Glu89 is the Proton donor of the active site. Glu120 is a catalytic residue.

It belongs to the GCKR-like family. MurNAc-6-P etherase subfamily. In terms of assembly, homodimer.

It catalyses the reaction N-acetyl-D-muramate 6-phosphate + H2O = N-acetyl-D-glucosamine 6-phosphate + (R)-lactate. It functions in the pathway amino-sugar metabolism; N-acetylmuramate degradation. Specifically catalyzes the cleavage of the D-lactyl ether substituent of MurNAc 6-phosphate, producing GlcNAc 6-phosphate and D-lactate. This Synechocystis sp. (strain ATCC 27184 / PCC 6803 / Kazusa) protein is N-acetylmuramic acid 6-phosphate etherase.